The primary structure comprises 499 residues: Probable cytosol aminopeptidase (499 aa).

The Mn(2+) site is built by lysine 263 and aspartate 268. Lysine 275 is an active-site residue. Mn(2+) contacts are provided by aspartate 286, aspartate 345, and glutamate 347. The active site involves arginine 349.

Belongs to the peptidase M17 family. Mn(2+) serves as cofactor.

It localises to the cytoplasm. The catalysed reaction is Release of an N-terminal amino acid, Xaa-|-Yaa-, in which Xaa is preferably Leu, but may be other amino acids including Pro although not Arg or Lys, and Yaa may be Pro. Amino acid amides and methyl esters are also readily hydrolyzed, but rates on arylamides are exceedingly low.. The enzyme catalyses Release of an N-terminal amino acid, preferentially leucine, but not glutamic or aspartic acids.. Functionally, presumably involved in the processing and regular turnover of intracellular proteins. Catalyzes the removal of unsubstituted N-terminal amino acids from various peptides. This Chlamydia trachomatis serovar A (strain ATCC VR-571B / DSM 19440 / HAR-13) protein is Probable cytosol aminopeptidase.